Reading from the N-terminus, the 533-residue chain is Amidophosphoribosyltransferase (533 aa).

Catalysis depends on Cys-2, which acts as the Nucleophile. The region spanning 2–238 (CGILALMLAD…PGECVFIRRS (237 aa)) is the Glutamine amidotransferase type-2 domain. Residues Asp-383 and Asp-384 each coordinate Mg(2+). Phosphoserine is present on Ser-506.

It in the C-terminal section; belongs to the purine/pyrimidine phosphoribosyltransferase family. The cofactor is Mg(2+).

The enzyme catalyses 5-phospho-beta-D-ribosylamine + L-glutamate + diphosphate = 5-phospho-alpha-D-ribose 1-diphosphate + L-glutamine + H2O. The protein operates within purine metabolism; IMP biosynthesis via de novo pathway; N(1)-(5-phospho-D-ribosyl)glycinamide from 5-phospho-alpha-D-ribose 1-diphosphate: step 1/2. In Schizosaccharomyces pombe (strain 972 / ATCC 24843) (Fission yeast), this protein is Amidophosphoribosyltransferase (ade4).